We begin with the raw amino-acid sequence, 396 residues long: Flavohemoprotein (396 aa).

The region spanning 1 to 136 is the Globin domain; that stretch reads MLDAQTIATV…LANVFINREA (136 aa). His-85 provides a ligand contact to heme b. Active-site charge relay system residues include Tyr-95 and Glu-135. The interval 147-396 is reductase; sequence GGWEGTRDFR…YECFGPHKVL (250 aa). The FAD-binding FR-type domain occupies 150–255; it reads EGTRDFRIVA…VAPAGDFFMA (106 aa). FAD is bound by residues Tyr-188 and 204–207; that span reads RQYS. Residue 268 to 273 participates in NADP(+) binding; sequence GVGQTP. 389–392 is an FAD binding site; the sequence is CFGP.

It belongs to the globin family. Two-domain flavohemoproteins subfamily. In the C-terminal section; belongs to the flavoprotein pyridine nucleotide cytochrome reductase family. It depends on heme b as a cofactor. FAD serves as cofactor.

It carries out the reaction 2 nitric oxide + NADPH + 2 O2 = 2 nitrate + NADP(+) + H(+). The catalysed reaction is 2 nitric oxide + NADH + 2 O2 = 2 nitrate + NAD(+) + H(+). Is involved in NO detoxification in an aerobic process, termed nitric oxide dioxygenase (NOD) reaction that utilizes O(2) and NAD(P)H to convert NO to nitrate, which protects the bacterium from various noxious nitrogen compounds. Therefore, plays a central role in the inducible response to nitrosative stress. The protein is Flavohemoprotein of Escherichia coli O6:H1 (strain CFT073 / ATCC 700928 / UPEC).